The chain runs to 683 residues: Long-chain-fatty-acid--CoA ligase 5 (683 aa).

The helical; Signal-anchor for type III membrane protein transmembrane segment at 12–32 threads the bilayer; it reads LPTPALICLLTFGTAIFLWLI. Residues 33–683 lie on the Cytoplasmic side of the membrane; the sequence is NRPQPVLPLI…IKSLYESIEE (651 aa). An N6-acetyllysine modification is found at lysine 361.

This sequence belongs to the ATP-dependent AMP-binding enzyme family. In terms of tissue distribution, expressed most abundantly in the small intestine, and to a much lesser extent in the lung, liver, adrenal gland, adipose tissue and kidney.

The protein localises to the mitochondrion. Its subcellular location is the endoplasmic reticulum. The protein resides in the mitochondrion outer membrane. It localises to the endoplasmic reticulum membrane. It is found in the cell membrane. It carries out the reaction a long-chain fatty acid + ATP + CoA = a long-chain fatty acyl-CoA + AMP + diphosphate. The catalysed reaction is (5Z,8Z,11Z,14Z)-eicosatetraenoate + ATP + CoA = (5Z,8Z,11Z,14Z)-eicosatetraenoyl-CoA + AMP + diphosphate. It catalyses the reaction 15-hydroxy-(5Z,8Z,11Z,13E)-eicosatetraenoate + ATP + CoA = 15-hydroxy-(5Z,8Z,11Z,13E)-eicosatetraenoyl-CoA + AMP + diphosphate. The enzyme catalyses 12-hydroxy-(5Z,8Z,10E,14Z)-eicosatetraenoate + ATP + CoA = 12-hydroxy-(5Z,8Z,10E,14Z)-eicosatetraenoyl-CoA + AMP + diphosphate. It carries out the reaction 5-hydroxy-(6E,8Z,11Z,14Z)-eicosatetraenoate + ATP + CoA = 5-hydroxy-(6E,8Z,11Z,14Z)-eicosatetraenoyl-CoA + AMP + diphosphate. The catalysed reaction is 14,15-epoxy-(5Z,8Z,11Z)-eicosatrienoate + ATP + CoA = 14,15-epoxy-(5Z,8Z,11Z)-eicosatrienoyl-CoA + AMP + diphosphate. It catalyses the reaction 11,12-epoxy-(5Z,8Z,14Z)-eicosatrienoate + ATP + CoA = 11,12-epoxy-(5Z,8Z,14Z)-eicosatrienoyl-CoA + AMP + diphosphate. The enzyme catalyses hexadecanoate + ATP + CoA = hexadecanoyl-CoA + AMP + diphosphate. It carries out the reaction (E)-hexadec-2-enoate + ATP + CoA = (2E)-hexadecenoyl-CoA + AMP + diphosphate. The catalysed reaction is (9Z)-octadecenoate + ATP + CoA = (9Z)-octadecenoyl-CoA + AMP + diphosphate. In terms of biological role, catalyzes the conversion of long-chain fatty acids to their active form acyl-CoAs for both synthesis of cellular lipids, and degradation via beta-oxidation. ACSL5 may sensitize epithelial cells to apoptosis specifically triggered by the death ligand TRAIL at the villus tip of the crypt-villus axis of the small intestine. May have a role in the survival of glioma cells. May activate fatty acids from exogenous sources for the synthesis of triacylglycerol destined for intracellular storage. It was suggested that it may also stimulate fatty acid oxidation. Utilizes a wide range of saturated fatty acids with a preference for C16-C18 unsaturated fatty acids. The chain is Long-chain-fatty-acid--CoA ligase 5 from Rattus norvegicus (Rat).